Here is a 480-residue protein sequence, read N- to C-terminus: Major facilitator superfamily domain-containing protein 12 (480 aa).

M1 is subject to N-acetylmethionine. Residues 1–26 (MGPGPPAAGAAPSPRPLSLVARLSYA) lie on the Cytoplasmic side of the membrane. A helical transmembrane segment spans residues 27-47 (VGHFLNDLCASMWFTYLLLYL). Residues 48-56 (HSVRAYSSR) lie on the Lumenal side of the membrane. A helical membrane pass occupies residues 57–77 (GAGLLLLLGQVADGLCTPLVG). Residues 78-97 (YEADRAASCCARYGPRKAWH) are Cytoplasmic-facing. Residues 98–118 (LVGTVCVLLSFPFIFSPCLGC) form a helical membrane-spanning segment. The Lumenal portion of the chain corresponds to 119-124 (GAATPE). The chain crosses the membrane as a helical span at residues 125–145 (WAALLYYGPFIVIFQFGWAST). The Cytoplasmic portion of the chain corresponds to 146–170 (QISHLSLIPELVTNDHEKVELTALR). The helical transmembrane segment at 171–191 (YAFTVVANITVYGAAWLLLHL) threads the bilayer. Residues 192 to 218 (QGSSRVEPTQDISISDQLGGQDVPVFR) lie on the Lumenal side of the membrane. Residues 219–239 (NLSLLVVGVGAVFSLLFHLGT) form a helical membrane-spanning segment. The Cytoplasmic segment spans residues 240-279 (RERRRPHAEEPGEHTPLLAPATAQPLLLWKHWLREPAFYQ). Phosphothreonine; by MTOR is present on T254. The helical transmembrane segment at 280–302 (VGILYMTTRLIVNLSQTYMAMYL) threads the bilayer. Residues 303–310 (TYSLHLPK) are Lumenal-facing. Residues 311-331 (KFIATIPLVMYLSGFLSSFLM) traverse the membrane as a helical segment. Residues 332-347 (KPINKCIGRNMTYFSG) are Cytoplasmic-facing. The next 2 membrane-spanning stretches (helical) occupy residues 348–368 (LLVILAFAAWVALAEGLGVAV) and 369–389 (YAAAVLLGAGCATILVTSLAM). Residues 390-402 (TADLIGPHTNSGA) lie on the Cytoplasmic side of the membrane. Residues 403–423 (FVYGSMSFLDKVANGLAVMAI) traverse the membrane as a helical segment. Residues 424–446 (QSLHPCPSELCCRACVSFYHWAM) lie on the Lumenal side of the membrane. Residues 447–467 (VAVTGGVGVAAALCLCSLLLW) form a helical membrane-spanning segment. At 468 to 480 (PTRLRRWDRDARP) the chain is on the cytoplasmic side.

It belongs to the major facilitator superfamily. In terms of processing, phosphorylation at Thr-254 by MTOR via mTORC1 pathway promotes cysteine transport in lysosomes, thereby regulating lysosomal cysteine and cystine storage and redox homeostasis. Widely expressed, with high expression in primary melanocytes.

The protein localises to the melanosome membrane. The protein resides in the lysosome membrane. The enzyme catalyses L-cysteine(in) = L-cysteine(out). Transporter that mediates the import of cysteine into melanosomes, thereby regulating skin pigmentation. In melanosomes, cysteine import is required both for normal levels of cystine, the oxidized dimer of cysteine, and provide cysteine for the production of the cysteinyldopas used in pheomelanin synthesis, thereby regulating skin pigmentation. Also catalyzes import of cysteine into lysosomes in non-pigmented cells, regulating lysosomal cystine and cysteine storage, which is essnetial for redox homeostasis. This is Major facilitator superfamily domain-containing protein 12 from Homo sapiens (Human).